Here is a 330-residue protein sequence, read N- to C-terminus: Phosphate acyltransferase (330 aa).

This sequence belongs to the PlsX family. Homodimer. Probably interacts with PlsY.

The protein localises to the cytoplasm. The catalysed reaction is a fatty acyl-[ACP] + phosphate = an acyl phosphate + holo-[ACP]. It functions in the pathway lipid metabolism; phospholipid metabolism. Functionally, catalyzes the reversible formation of acyl-phosphate (acyl-PO(4)) from acyl-[acyl-carrier-protein] (acyl-ACP). This enzyme utilizes acyl-ACP as fatty acyl donor, but not acyl-CoA. In Bacillus mycoides (strain KBAB4) (Bacillus weihenstephanensis), this protein is Phosphate acyltransferase.